We begin with the raw amino-acid sequence, 214 residues long: Probable GTP-binding protein EngB (214 aa).

The 175-residue stretch at 30–204 (EGFEVAFAGR…YTVLAGWMEL (175 aa)) folds into the EngB-type G domain. GTP contacts are provided by residues 38 to 45 (GRSNAGKS), 64 to 68 (GRTQL), 82 to 85 (DLPG), 149 to 152 (TKAD), and 182 to 185 (LFSA). Mg(2+) contacts are provided by serine 45 and threonine 66.

Belongs to the TRAFAC class TrmE-Era-EngA-EngB-Septin-like GTPase superfamily. EngB GTPase family. The cofactor is Mg(2+).

Necessary for normal cell division and for the maintenance of normal septation. The chain is Probable GTP-binding protein EngB from Pseudomonas fluorescens (strain Pf0-1).